The primary structure comprises 189 residues: Peptide deformylase (189 aa).

Fe cation-binding residues include Cys116 and His159. Glu160 is a catalytic residue. His163 serves as a coordination point for Fe cation.

The protein belongs to the polypeptide deformylase family. Requires Fe(2+) as cofactor.

The enzyme catalyses N-terminal N-formyl-L-methionyl-[peptide] + H2O = N-terminal L-methionyl-[peptide] + formate. Functionally, removes the formyl group from the N-terminal Met of newly synthesized proteins. Requires at least a dipeptide for an efficient rate of reaction. N-terminal L-methionine is a prerequisite for activity but the enzyme has broad specificity at other positions. The polypeptide is Peptide deformylase (Limosilactobacillus fermentum (strain NBRC 3956 / LMG 18251) (Lactobacillus fermentum)).